Consider the following 347-residue polypeptide: MRAELPKRVVVERGALQFLPEVLRELGCSKTVVVTDSGVWSVVGSVVEGALRGLAYEVVYIEAADNSNVERARSAARRVEACAVAGLGGGRPVDVAKYAAFMEGLPFVSVPTAISHDGFASPIVALKDPEGNPLSIFTRPPAAVLVDLAVVSRAPRRLLASGVGDIVGKVTSVADARLAQRLTGEEVPEVALRMAETAARMVLDEVDEIASWTERGVGVLAQAGLLAGMAMAVAGSSRPCSGSEHLFSHSLDKYVPWKKSLHGEQVGVGAIIASYLHGFNWRVIRDALAKVGAPTTVEGLGVTGEDAVRALLKARELRKRFTILDVVELNEGLAWKVLRETGVAPTA.

NAD(+) contacts are provided by residues 90 to 94 and 112 to 115; these read GRPVD and TAIS. Asp-117 lines the substrate pocket. NAD(+) is bound at residue Ser-121. Asp-165 contacts substrate. Positions 165 and 245 each coordinate Zn(2+). His-249 contacts substrate. His-262 is a binding site for Zn(2+).

Belongs to the glycerol-1-phosphate dehydrogenase family. Homodimer. Requires Zn(2+) as cofactor.

Its subcellular location is the cytoplasm. It catalyses the reaction sn-glycerol 1-phosphate + NAD(+) = dihydroxyacetone phosphate + NADH + H(+). The catalysed reaction is sn-glycerol 1-phosphate + NADP(+) = dihydroxyacetone phosphate + NADPH + H(+). Its pathway is membrane lipid metabolism; glycerophospholipid metabolism. Catalyzes the NAD(P)H-dependent reduction of dihydroxyacetonephosphate (DHAP or glycerone phosphate) to glycerol 1-phosphate (G1P). The G1P thus generated is used as the glycerophosphate backbone of phospholipids in the cellular membranes of Archaea. The chain is Glycerol-1-phosphate dehydrogenase [NAD(P)+] from Thermofilum pendens (strain DSM 2475 / Hrk 5).